Consider the following 166-residue polypeptide: MRMSTTTEIIAHHWAFAVFLIGAVGLCGLMLLGAYFLGGRAQARAKNVPYESGIDSVGSARMRLSAKFYLVAMFFVIFDVEALYLYAWSISIRESGWIGFIEAVIFILVLLAGLFYLVRIGALDWTPTRSNRRVSKPSTVRYASSHPQDISQELSVAGSQQANESR.

A run of 3 helical transmembrane segments spans residues 16–36 (FAVF…GAYF), 68–88 (FYLV…LYAW), and 98–118 (IGFI…FYLV). A disordered region spans residues 141–166 (RYASSHPQDISQELSVAGSQQANESR).

This sequence belongs to the complex I subunit 3 family. In terms of assembly, NDH-1 is composed of 13 different subunits. Subunits NuoA, H, J, K, L, M, N constitute the membrane sector of the complex.

It is found in the cell inner membrane. It carries out the reaction a quinone + NADH + 5 H(+)(in) = a quinol + NAD(+) + 4 H(+)(out). Its function is as follows. NDH-1 shuttles electrons from NADH, via FMN and iron-sulfur (Fe-S) centers, to quinones in the respiratory chain. The immediate electron acceptor for the enzyme in this species is believed to be ubiquinone. Couples the redox reaction to proton translocation (for every two electrons transferred, four hydrogen ions are translocated across the cytoplasmic membrane), and thus conserves the redox energy in a proton gradient. The chain is NADH-quinone oxidoreductase subunit A from Yersinia pseudotuberculosis serotype IB (strain PB1/+).